A 275-amino-acid chain; its full sequence is Energy-coupling factor transporter ATP-binding protein EcfA1 (275 aa).

The 236-residue stretch at 5–240 (IDVKNLSFRY…NDLDQIGLDD (236 aa)) folds into the ABC transporter domain. 40–47 (GHNGSGKS) serves as a coordination point for ATP.

It belongs to the ABC transporter superfamily. Energy-coupling factor EcfA family. In terms of assembly, forms a stable energy-coupling factor (ECF) transporter complex composed of 2 membrane-embedded substrate-binding proteins (S component), 2 ATP-binding proteins (A component) and 2 transmembrane proteins (T component).

The protein localises to the cell membrane. Its function is as follows. ATP-binding (A) component of a common energy-coupling factor (ECF) ABC-transporter complex. Unlike classic ABC transporters this ECF transporter provides the energy necessary to transport a number of different substrates. The chain is Energy-coupling factor transporter ATP-binding protein EcfA1 from Streptococcus pneumoniae serotype 4 (strain ATCC BAA-334 / TIGR4).